Consider the following 871-residue polypeptide: Patatin-like phospholipase domain-containing protein CNBE2340 (871 aa).

Positions 20–53 (NEDSPLSPRSFSLPPESPQLSTASPIHQRVSRKR) are disordered. Positions 23–33 (SPLSPRSFSLP) are enriched in low complexity. The helical transmembrane segment at 68 to 88 (WPLLFFIFFIIYLEFSAYVIT) threads the bilayer. The region spanning 243–435 (LCLSGGASFG…REDIPLGSLH (193 aa)) is the PNPLA domain. Residues 274–278 (GTSAG) carry the GXSXG motif. S276 functions as the Nucleophile in the catalytic mechanism. The active-site Proton acceptor is D422. Disordered regions lie at residues 586-707 (ALSH…NFGD), 720-748 (LSSPFRSIRSNTSSSSNNVQSPSSSQRFR), and 760-871 (VSES…QDGA). Polar residues-rich tracts occupy residues 594-606 (NDPATSLPETNPE) and 687-706 (PTHSPIATESPQRNYTSNFG). The span at 721 to 748 (SSPFRSIRSNTSSSSNNVQSPSSSQRFR) shows a compositional bias: low complexity. Over residues 798–820 (VESHSDRSEDEMLHSGANVKEEY) the composition is skewed to basic and acidic residues.

It belongs to the PLPL family.

Its subcellular location is the membrane. In terms of biological role, probable lipid hydrolase. The sequence is that of Patatin-like phospholipase domain-containing protein CNBE2340 from Cryptococcus neoformans var. neoformans serotype D (strain B-3501A) (Filobasidiella neoformans).